We begin with the raw amino-acid sequence, 205 residues long: Large ribosomal subunit protein bL9 (205 aa).

Residues arginine 160–alanine 205 are disordered. A compositionally biased stretch (low complexity) spans glutamate 184–aspartate 195.

Belongs to the bacterial ribosomal protein bL9 family.

Its function is as follows. Binds to the 23S rRNA. The sequence is that of Large ribosomal subunit protein bL9 from Anaplasma phagocytophilum (strain HZ).